The primary structure comprises 372 residues: Glutamate 5-kinase (372 aa).

Position 14 (Lys-14) interacts with ATP. The substrate site is built by Ser-54, Asp-141, and Asn-153. Residue 173–174 (TD) participates in ATP binding. Positions 280 to 358 (RGTLVLDEGA…DAIVGVLGYM (79 aa)) constitute a PUA domain.

It belongs to the glutamate 5-kinase family.

Its subcellular location is the cytoplasm. It catalyses the reaction L-glutamate + ATP = L-glutamyl 5-phosphate + ADP. It functions in the pathway amino-acid biosynthesis; L-proline biosynthesis; L-glutamate 5-semialdehyde from L-glutamate: step 1/2. In terms of biological role, catalyzes the transfer of a phosphate group to glutamate to form L-glutamate 5-phosphate. In Pseudomonas fluorescens (strain ATCC BAA-477 / NRRL B-23932 / Pf-5), this protein is Glutamate 5-kinase.